Reading from the N-terminus, the 335-residue chain is 3-hydroxy-3-methylglutaryl-CoA lyase, cytoplasmic (335 aa).

Glycine 2 carries the N-myristoyl glycine lipid modification. A Pyruvate carboxyltransferase domain is found at 43-310; sequence VKIVEVGPRD…ETGVDLLKVM (268 aa). Residue arginine 51 coordinates substrate. Residue aspartate 52 coordinates a divalent metal cation. N6-acetyllysine is present on lysine 58. Residues histidine 243 and histidine 245 each contribute to the a divalent metal cation site. Residue cysteine 276 is part of the active site. An a divalent metal cation-binding site is contributed by asparagine 285.

The protein belongs to the HMG-CoA lyase family. A divalent metal cation serves as cofactor.

The protein localises to the cytoplasm. Its subcellular location is the cytosol. It is found in the endoplasmic reticulum membrane. The enzyme catalyses (3S)-3-hydroxy-3-methylglutaryl-CoA = acetoacetate + acetyl-CoA. Its pathway is metabolic intermediate metabolism; (S)-3-hydroxy-3-methylglutaryl-CoA degradation; acetoacetate from (S)-3-hydroxy-3-methylglutaryl-CoA: step 1/1. Functionally, non-mitochondrial 3-hydroxy-3-methylglutaryl-CoA lyase that catalyzes a cation-dependent cleavage of (S)-3-hydroxy-3-methylglutaryl-CoA into acetyl-CoA and acetoacetate, a key step in ketogenesis, the products of which support energy production in nonhepatic animal tissues. This Danio rerio (Zebrafish) protein is 3-hydroxy-3-methylglutaryl-CoA lyase, cytoplasmic (hmgcll1).